Here is a 506-residue protein sequence, read N- to C-terminus: Maturase K (506 aa).

It belongs to the intron maturase 2 family. MatK subfamily.

It is found in the plastid. It localises to the chloroplast. Functionally, usually encoded in the trnK tRNA gene intron. Probably assists in splicing its own and other chloroplast group II introns. The sequence is that of Maturase K from Austrosteenisia blackii (Blood vine).